Reading from the N-terminus, the 311-residue chain is uncharacterized protein (311 aa).

The next 9 membrane-spanning stretches (helical) occupy residues 11 to 31 (LDNW…GYLS), 34 to 54 (VGIV…FLSL), 72 to 92 (LAIS…LFGI), 101 to 121 (HVIV…FVAQ), 147 to 167 (IEGI…WYLM), 198 to 218 (WFGV…FALS), 233 to 253 (GFIA…SIVI), 257 to 277 (FALA…TYLL), and 279 to 299 (TIPF…NVGP).

It is found in the cell membrane. This is an uncharacterized protein from Mycoplasma pneumoniae (strain ATCC 29342 / M129 / Subtype 1) (Mycoplasmoides pneumoniae).